We begin with the raw amino-acid sequence, 106 residues long: uncharacterized protein (106 aa).

Helical transmembrane passes span 43 to 63 (CSTIIACNLGSWFFKISLAIV) and 86 to 106 (IPELALIIICTFIYFLYFSLF).

The protein localises to the membrane. This is an uncharacterized protein from Saccharomyces cerevisiae (strain ATCC 204508 / S288c) (Baker's yeast).